We begin with the raw amino-acid sequence, 244 residues long: Cobalt transport protein CbiM (244 aa).

The signal sequence occupies residues 1 to 27; the sequence is MVEGMLKTNFRLLFLLIFLLIPTPVLA. 6 consecutive transmembrane segments (helical) span residues 36 to 56, 65 to 85, 102 to 122, 134 to 154, 168 to 188, and 196 to 216; these read PVKW…VGFI, GPGA…LSAL, LAAI…VLIF, TLGA…YGVY, IFLA…VQLA, and LFLS…PLAI.

It belongs to the CbiM family. As to quaternary structure, forms an energy-coupling factor (ECF) transporter complex composed of an ATP-binding protein (A component, CbiO), a transmembrane protein (T component, CbiQ) and 2 possible substrate-capture proteins (S components, CbiM and CbiN) of unknown stoichimetry.

The protein localises to the cell membrane. It participates in cofactor biosynthesis; adenosylcobalamin biosynthesis. Its function is as follows. Part of the energy-coupling factor (ECF) transporter complex CbiMNOQ involved in cobalt import. In Carboxydothermus hydrogenoformans (strain ATCC BAA-161 / DSM 6008 / Z-2901), this protein is Cobalt transport protein CbiM.